The primary structure comprises 211 residues: Beta-crystallin B3 (211 aa).

M1 is subject to N-acetylmethionine. A2 bears the N-acetylalanine; in Beta-crystallin B3, N-terminally processed mark. The segment at 2-23 (AEQHGAPEQAAAGKSHGGLGGS) is N-terminal arm. Beta/gamma crystallin 'Greek key' domains are found at residues 24-63 (YKVT…QVES) and 64-108 (GPWL…RPLH). The tract at residues 109 to 113 (IDGPD) is connecting peptide. 2 consecutive Beta/gamma crystallin 'Greek key' domains span residues 114 to 155 (HKLH…RVIN) and 156 to 198 (GTWV…RRIR). Positions 200-211 (QKWHKRGCFLSS) are C-terminal arm.

It belongs to the beta/gamma-crystallin family. As to quaternary structure, homo/heterodimer, or complexes of higher-order. The structure of beta-crystallin oligomers seems to be stabilized through interactions between the N-terminal arms.

Its function is as follows. Crystallins are the dominant structural components of the vertebrate eye lens. In Mus musculus (Mouse), this protein is Beta-crystallin B3 (Crybb3).